The primary structure comprises 426 residues: Endothelin-1 receptor (426 aa).

An N-terminal signal peptide occupies residues 1-20 (METFCLKVTFWVALVGYVIG). The Extracellular portion of the chain corresponds to 21 to 79 (DHPESYSTNLSTPVDFTTFHGTELSFLVTTHRPTNLALPSNGSMHSYCPQQTKITSAFK). N-linked (GlcNAc...) asparagine glycans are attached at residues Asn29 and Asn61. A helical membrane pass occupies residues 80–101 (YINTVISCTIFIVGMVGNATLL). Residues 102–111 (RIIYQNKCMR) are Cytoplasmic-facing. The helical transmembrane segment at 112–131 (NGPNALIASLALGDLIYVVI) threads the bilayer. Topologically, residues 132–158 (DLPINVFKLLAGRWPFDHNDFGVFLCK) are extracellular. A disulfide bridge connects residues Cys157 and Cys238. The chain crosses the membrane as a helical span at residues 159 to 180 (LFPFLQKSSVGITVLNLCALSV). The Cytoplasmic segment spans residues 181-204 (DRYRAVASWSRVQGIGIPLITAIE). Residues 205 to 228 (IVSIWILSFILAIPEAIGFVMVPF) traverse the membrane as a helical segment. Residues 229-255 (EYKGEQHKTCMLNATSKFMEFYQDVKD) lie on the Extracellular side of the membrane. N-linked (GlcNAc...) asparagine glycosylation occurs at Asn241. A helical membrane pass occupies residues 256 to 277 (WWLFGFYFCMPLVCTAIFYTLM). Residues 278–305 (TCEMLNRRNGSLRIALSEHLKQRREVAK) lie on the Cytoplasmic side of the membrane. Residues 306 to 327 (TVFCLVVIFALCWFPLHLSRIL) traverse the membrane as a helical segment. Residues 328–346 (KKTVYDEMDKNRCELLSFL) lie on the Extracellular side of the membrane. The helical transmembrane segment at 347-371 (RLMDYIGINLATMNSCINPIALYFV) threads the bilayer. Residues 372–426 (SKKFKNCFQSCLCCCCYQSKSLMTSVPMNGTSIQWKNHEQNNHNTERSSHKDSIN) lie on the Cytoplasmic side of the membrane. Phosphoserine is present on Ser424.

This sequence belongs to the G-protein coupled receptor 1 family. Endothelin receptor subfamily. EDNRA sub-subfamily. Interacts with HDAC7 and KAT5.

It localises to the cell membrane. Functionally, receptor for endothelin-1. Mediates its action by association with G proteins that activate a phosphatidylinositol-calcium second messenger system. The rank order of binding affinities for ET-A is: ET1 &gt; ET2 &gt;&gt; ET3. The chain is Endothelin-1 receptor from Canis lupus familiaris (Dog).